A 394-amino-acid polypeptide reads, in one-letter code: Guanine nucleotide-binding protein G(s) subunit alpha isoforms short (394 aa).

The disordered stretch occupies residues 1–23 (MGCLGNSKTEDQRNEEKAQREAN). Residue Gly-2 is the site of N-palmitoyl glycine attachment. Residue Cys-3 is the site of S-palmitoyl cysteine attachment. A compositionally biased stretch (basic and acidic residues) spans 8 to 23 (KTEDQRNEEKAQREAN). In terms of domain architecture, G-alpha spans 39–394 (ATHRLLLLGA…RMHLRQYELL (356 aa)). The tract at residues 42-55 (RLLLLGAGESGKST) is G1 motif. GTP is bound at residue 47–55 (GAGESGKST). Ser-54 serves as a coordination point for Mg(2+). A disordered region spans residues 68 to 90 (FNGEGGEEDPQAARSNSDGEKAT). Positions 196–204 (DLLRCRVLT) are G2 motif. Residues 197–204 (LLRCRVLT), 223–227 (DVGGQ), and 292–295 (NKQD) contribute to the GTP site. Thr-204 provides a ligand contact to Mg(2+). The interval 219–228 (FHMFDVGGQR) is G3 motif. The G4 motif stretch occupies residues 288–295 (ILFLNKQD). A Glycyl lysine isopeptide (Lys-Gly) (interchain with G-Cter in ubiquitin) cross-link involves residue Lys-300. Ser-352 is modified (phosphoserine). Residues 364–369 (TCAVDT) are G5 motif. A GTP-binding site is contributed by Ala-366.

This sequence belongs to the G-alpha family. G(s) subfamily. As to quaternary structure, heterotrimeric G proteins are composed of 3 units; alpha, beta and gamma. The alpha chain contains the guanine nucleotide binding site. Component of the TAS2R14-GNAS2 complex, consisting of TAS2R14, GNAS2, GNB1 and GNG2; within the complex interacts with TAS2R14; this complex plays a role in the perception of bitterness. Interacts with CRY1; the interaction may block GPCR-mediated regulation of cAMP concentrations. Interacts with ADCY6 and stimulates its adenylyl cyclase activity. Interacts with ADCY2 and ADCY5. Interacts (GDP-bound form) with RIC8B; promoting GNAS folding and association with the plasma membrane. Stimulates the ADCY5 adenylyl cyclase activity. Interaction with SASH1. Interacts with GASL2L2.

It is found in the cell membrane. The enzyme catalyses GTP + H2O = GDP + phosphate + H(+). Functionally, guanine nucleotide-binding proteins (G proteins) function as transducers in numerous signaling pathways controlled by G protein-coupled receptors (GPCRs). The alpha chain contains the guanine nucleotide binding site and alternates between an active, GTP-bound state and an inactive, GDP-bound state. Signaling by an activated GPCR promotes GDP release and GTP binding. The alpha subunit has a low GTPase activity that converts bound GTP to GDP, thereby terminating the signal. Both GDP release and GTP hydrolysis are modulated by numerous regulatory proteins. Signaling involves the activation of adenylyl cyclases, resulting in increased levels of the signaling molecule cAMP. Functions downstream of beta-adrenergic receptors. Stimulates the Ras signaling pathway via RAPGEF2. This chain is Guanine nucleotide-binding protein G(s) subunit alpha isoforms short (Gnas), found in Mus musculus (Mouse).